The chain runs to 209 residues: Uracil phosphoribosyltransferase (209 aa).

5-phospho-alpha-D-ribose 1-diphosphate-binding positions include Arg79, Arg104, and 131–139; that span reads DPMLATGGS. Residues Ile194 and 199–201 each bind uracil; that span reads GDA. Residue Asp200 participates in 5-phospho-alpha-D-ribose 1-diphosphate binding.

It belongs to the UPRTase family. It depends on Mg(2+) as a cofactor.

The enzyme catalyses UMP + diphosphate = 5-phospho-alpha-D-ribose 1-diphosphate + uracil. It functions in the pathway pyrimidine metabolism; UMP biosynthesis via salvage pathway; UMP from uracil: step 1/1. Allosterically activated by GTP. Functionally, catalyzes the conversion of uracil and 5-phospho-alpha-D-ribose 1-diphosphate (PRPP) to UMP and diphosphate. This Lactiplantibacillus plantarum (strain ATCC BAA-793 / NCIMB 8826 / WCFS1) (Lactobacillus plantarum) protein is Uracil phosphoribosyltransferase.